The sequence spans 326 residues: MASCVVKNWQGETVGSAELSLKVARPETASHILYLALRRQMTNARQGNAHTKTRAEVRGGGRKPWRQKGTGRARAGSIRSPLWRKGGVIFGPRKREYNLAMNRKERQLALRTALQSRVEDLIVVEDFQDQLNPPKTRAVAQALLRWGVMEDQSALLIVAERSEAVERAVRNIARVKLIGLDQLNVFDLLNVDWVLITTSALEKLKARWGSGAAAAAPTQADRLEDQAQAAEREARPVEQAEGQSQEQEEQAEAQAQPEAPPAQADQANQVALANPQVQETQEEELAQAQEREVQGQAELAQEAEPLAQPPAGEEAETAAAEEEDND.

A large ribosomal subunit protein uL4 region spans residues 1-211; sequence MASCVVKNWQ…EKLKARWGSG (211 aa). Disordered stretches follow at residues 44 to 76 and 211 to 326; these read ARQGNAHTKTRAEVRGGGRKPWRQKGTGRARAG and GAAA…EDND. Basic residues predominate over residues 60–71; sequence GGRKPWRQKGTG. The unknown stretch occupies residues 212–326; the sequence is AAAAAPTQAD…TAAAEEEDND (115 aa). Basic and acidic residues predominate over residues 221-238; it reads DRLEDQAQAAEREARPVE. Composition is skewed to low complexity over residues 252 to 279 and 294 to 312; these read EAQAQPEAPPAQADQANQVALANPQVQE and QGQAELAQEAEPLAQPPAG. Acidic residues predominate over residues 313 to 326; it reads EEAETAAAEEEDND.

It belongs to the universal ribosomal protein uL4 family. As to quaternary structure, part of the 50S ribosomal subunit.

One of the primary rRNA binding proteins, this protein initially binds near the 5'-end of the 23S rRNA. It is important during the early stages of 50S assembly. It makes multiple contacts with different domains of the 23S rRNA in the assembled 50S subunit and ribosome. Functionally, forms part of the polypeptide exit tunnel. In Synechococcus sp. (strain JA-3-3Ab) (Cyanobacteria bacterium Yellowstone A-Prime), this protein is Large ribosomal subunit protein uL4.